The primary structure comprises 942 residues: NBPF family member NBPF8 (942 aa).

Residues 89 to 130 adopt a coiled-coil conformation; the sequence is AEELRQYKVLVHSQERELTQLKEKLQEGRDASRSLNEHLQAL. The tract at residues 161–203 is disordered; it reads KLSPENDEDEDEDVQVEEDEKVQKSSAPREVQKAEESKVPEDS. The segment covering 165-180 has biased composition (acidic residues); it reads ENDEDEDEDVQVEEDE. An Olduvai 1 domain is found at 165-259; sequence ENDEDEDEDV…ECQDALNILS (95 aa). Residues 190–201 are compositionally biased toward basic and acidic residues; that stretch reads EVQKAEESKVPE. Positions 339-401 form a coiled coil; the sequence is KSMLRNERQF…LSLNEHLQAL (63 aa). 6 consecutive Olduvai domains span residues 436–528, 529–617, 620–675, 676–767, 770–843, and 844–904; these read ENDN…HIIP, ENES…ATGP, SREL…VDMD, EIEK…PPCP, SREL…RSKK, and KRRR…RSVF. Disordered regions lie at residues 451–474 and 528–566; these read EKVQ…PEDS and PENE…EGYS. 2 stretches are compositionally biased toward acidic residues: residues 530 to 539 and 550 to 562; these read NESDDEEEEE and ESEE…ESWD. Positions 831-849 are enriched in basic residues; the sequence is GKGKIRRGRRSKKKRRRGR. The tract at residues 831–863 is disordered; the sequence is GKGKIRRGRRSKKKRRRGRKEGEEDQNPPCPRL.

The protein belongs to the NBPF family. As to expression, expressed in the mammary gland.

The protein localises to the cytoplasm. This chain is NBPF family member NBPF8, found in Homo sapiens (Human).